The sequence spans 142 residues: COA8 family protein Y39B6A.34, mitochondrial (142 aa).

The protein belongs to the COA8 family.

Its subcellular location is the mitochondrion inner membrane. May be required for cytochrome c complex (COX) assembly and function, COX being the terminal component of the mitochondrial respiratory chain. The protein is COA8 family protein Y39B6A.34, mitochondrial of Caenorhabditis elegans.